Reading from the N-terminus, the 285-residue chain is Probable endonuclease 4 (285 aa).

Positions 69, 109, 145, 179, 182, 216, 229, 231, and 261 each coordinate Zn(2+).

It belongs to the AP endonuclease 2 family. Requires Zn(2+) as cofactor.

It carries out the reaction Endonucleolytic cleavage to 5'-phosphooligonucleotide end-products.. Its function is as follows. Endonuclease IV plays a role in DNA repair. It cleaves phosphodiester bonds at apurinic or apyrimidinic (AP) sites, generating a 3'-hydroxyl group and a 5'-terminal sugar phosphate. The protein is Probable endonuclease 4 of Yersinia pestis bv. Antiqua (strain Antiqua).